Here is a 413-residue protein sequence, read N- to C-terminus: Phosphopentomutase (413 aa).

Asp11, Asp306, His311, Asp347, His348, and His359 together coordinate Mn(2+).

The protein belongs to the phosphopentomutase family. It depends on Mn(2+) as a cofactor.

Its subcellular location is the cytoplasm. It carries out the reaction 2-deoxy-alpha-D-ribose 1-phosphate = 2-deoxy-D-ribose 5-phosphate. It catalyses the reaction alpha-D-ribose 1-phosphate = D-ribose 5-phosphate. It participates in carbohydrate degradation; 2-deoxy-D-ribose 1-phosphate degradation; D-glyceraldehyde 3-phosphate and acetaldehyde from 2-deoxy-alpha-D-ribose 1-phosphate: step 1/2. In terms of biological role, isomerase that catalyzes the conversion of deoxy-ribose 1-phosphate (dRib-1-P) and ribose 1-phosphate (Rib-1-P) to deoxy-ribose 5-phosphate (dRib-5-P) and ribose 5-phosphate (Rib-5-P), respectively. This Helicobacter acinonychis (strain Sheeba) protein is Phosphopentomutase.